The primary structure comprises 344 residues: Ferrochelatase (344 aa).

Fe cation-binding residues include histidine 214 and glutamate 295.

The protein belongs to the ferrochelatase family.

The protein resides in the cytoplasm. It catalyses the reaction heme b + 2 H(+) = protoporphyrin IX + Fe(2+). It participates in porphyrin-containing compound metabolism; protoheme biosynthesis; protoheme from protoporphyrin-IX: step 1/1. Functionally, catalyzes the ferrous insertion into protoporphyrin IX. This Rhizobium leguminosarum bv. trifolii (strain WSM2304) protein is Ferrochelatase.